A 402-amino-acid chain; its full sequence is Serine/threonine-protein kinase US3 homolog (402 aa).

Disordered regions lie at residues 1 to 21 (MSST…KVHD) and 46 to 88 (FPDS…SPET). The Protein kinase domain maps to 102-386 (YNIVSSLPPG…AQDILMLPLF (285 aa)). ATP is bound by residues 110 to 118 (PGSEGYIYV) and Lys127. Asp218 serves as the catalytic Proton acceptor.

It belongs to the protein kinase superfamily. Ser/Thr protein kinase family. Phosphorylated by UL13 homolog; this phosphorylation regulates subsequent phosphorylation of UL31 and UL34 homologs by US3. Autophosphorylated.

Its subcellular location is the host cytoplasm. It is found in the host nucleus. It catalyses the reaction L-seryl-[protein] + ATP = O-phospho-L-seryl-[protein] + ADP + H(+). The catalysed reaction is L-threonyl-[protein] + ATP = O-phospho-L-threonyl-[protein] + ADP + H(+). Functionally, multifunctional serine/threonine kinase that plays a role in several processes including egress of virus particles from the nucleus, modulation of the actin cytoskeleton and inhibition of apoptosis. Phosphorylates UL31 and UL34 homologs, two critical regulators of capsid budding from nucleus to endoplasmic reticulum, thereby facilitating virion egress. Modulates and redistributes host components of the nuclear envelope, including LMNA, emerin/EMD and the nuclear matrix protein MATR3. Phosphorylates envelope glycoprotein B (gB), probably to direct it to the cell surface. Promotes virus intracellular spread by restructuring host cell cytoskeleton. Blocks host apoptosis to extend cell survival and allow efficient viral replication. Promotes viral gene expression by phosphorylating host HDAC2 to reduce viral genome silencing. In Gallid herpesvirus 2 (strain GA) (GaHV-2), this protein is Serine/threonine-protein kinase US3 homolog (US1206).